We begin with the raw amino-acid sequence, 199 residues long: ATP-dependent Clp protease proteolytic subunit (199 aa).

The active-site Nucleophile is the S97. H122 is an active-site residue.

The protein belongs to the peptidase S14 family. As to quaternary structure, fourteen ClpP subunits assemble into 2 heptameric rings which stack back to back to give a disk-like structure with a central cavity, resembling the structure of eukaryotic proteasomes.

Its subcellular location is the cytoplasm. The catalysed reaction is Hydrolysis of proteins to small peptides in the presence of ATP and magnesium. alpha-casein is the usual test substrate. In the absence of ATP, only oligopeptides shorter than five residues are hydrolyzed (such as succinyl-Leu-Tyr-|-NHMec, and Leu-Tyr-Leu-|-Tyr-Trp, in which cleavage of the -Tyr-|-Leu- and -Tyr-|-Trp bonds also occurs).. Its function is as follows. Cleaves peptides in various proteins in a process that requires ATP hydrolysis. Has a chymotrypsin-like activity. Plays a major role in the degradation of misfolded proteins. The protein is ATP-dependent Clp protease proteolytic subunit of Geotalea daltonii (strain DSM 22248 / JCM 15807 / FRC-32) (Geobacter daltonii).